Consider the following 709-residue polypeptide: PP2C-like domain-containing protein CG9801 (709 aa).

3 disordered regions span residues 121–222, 503–530, and 678–709; these read DCYG…NSER, LHPS…SRPK, and GGGE…ETNF. Over residues 130–143 the composition is skewed to polar residues; the sequence is PPVQVATQNSTRLT. Positions 182-196 are enriched in low complexity; the sequence is ANLAAASAGTDAGKA. The span at 197-217 shows a compositional bias: polar residues; the sequence is NSDQNNRNVLNAKTEVSTDGD. The PPM-type phosphatase domain maps to 259 to 503; sequence SVSLYETNML…KSASAIYARL (245 aa).

The polypeptide is PP2C-like domain-containing protein CG9801 (Drosophila melanogaster (Fruit fly)).